A 761-amino-acid polypeptide reads, in one-letter code: 52 kDa repressor of the inhibitor of the protein kinase (761 aa).

The THAP-type zinc-finger motif lies at 1–86 (MPNFCAAPNC…LRDNAIPTIF (86 aa)). Residues 116–132 (QKKIDETSEQEQKHKET) show a composition bias toward basic and acidic residues. The interval 116 to 149 (QKKIDETSEQEQKHKETNNSNAQNPSEEEGEGQD) is disordered. Ser566 bears the Phosphoserine mark.

In terms of assembly, interacts with DNAJC3, probably sequestring it.

In terms of biological role, upstream regulator of interferon-induced serine/threonine protein kinase R (PKR). May block the PKR-inhibitory function of DNAJC3, resulting in restoration of kinase activity and suppression of cell growth. The sequence is that of 52 kDa repressor of the inhibitor of the protein kinase from Homo sapiens (Human).